A 147-amino-acid chain; its full sequence is Ubiquitin-conjugating enzyme E2 5A (147 aa).

Basic and acidic residues predominate over residues Met-1–Lys-15. Positions Met-1–Gly-24 are disordered. The UBC core domain maps to Met-1–Met-147. The active-site Glycyl thioester intermediate is the Cys-85.

This sequence belongs to the ubiquitin-conjugating enzyme family.

The catalysed reaction is S-ubiquitinyl-[E1 ubiquitin-activating enzyme]-L-cysteine + [E2 ubiquitin-conjugating enzyme]-L-cysteine = [E1 ubiquitin-activating enzyme]-L-cysteine + S-ubiquitinyl-[E2 ubiquitin-conjugating enzyme]-L-cysteine.. It participates in protein modification; protein ubiquitination. Its function is as follows. E2 conjugating enzyme that associates with the E3 ubiquitin-protein ligase EL5 to mediate ubiquitination of target proteins. This is Ubiquitin-conjugating enzyme E2 5A (UBC5A) from Oryza sativa subsp. japonica (Rice).